We begin with the raw amino-acid sequence, 287 residues long: Orotidine 5'-phosphate decarboxylase (287 aa).

Lysine 95 acts as the Proton donor in catalysis.

Belongs to the OMP decarboxylase family. Type 2 subfamily.

The catalysed reaction is orotidine 5'-phosphate + H(+) = UMP + CO2. Its pathway is pyrimidine metabolism; UMP biosynthesis via de novo pathway; UMP from orotate: step 2/2. The protein is Orotidine 5'-phosphate decarboxylase of Albidiferax ferrireducens (strain ATCC BAA-621 / DSM 15236 / T118) (Rhodoferax ferrireducens).